An 878-amino-acid polypeptide reads, in one-letter code: Calcium-transporting ATPase 1 (878 aa).

The next 4 helical transmembrane spans lie at 50 to 72 (LFID…VQLF), 76 to 95 (FVES…VAVV), 243 to 263 (LGWV…LRLF), and 281 to 301 (FAVA…VTIV). Ca(2+) is bound by residues Val287, Ala288, Ile290, and Glu292. The 4-aspartylphosphate intermediate role is filled by Asp334. A run of 6 helical transmembrane segments spans residues 681–701 (LFSG…VGWV), 704–724 (FTAL…AIAL), 753–773 (VILI…YVGQ), 779–799 (MGVA…TFAA), 816–836 (YVLM…LPFL), and 845–865 (AFGW…VICM). Positions 713 and 717 each coordinate Ca(2+).

Belongs to the cation transport ATPase (P-type) (TC 3.A.3) family. Type IIA subfamily.

It is found in the cell membrane. The catalysed reaction is Ca(2+)(in) + ATP + H2O = Ca(2+)(out) + ADP + phosphate + H(+). Inhibited by very high concentrations of cyclopiazonic acid (CPA). Functionally, catalyzes the hydrolysis of ATP coupled with the transport of calcium. This is Calcium-transporting ATPase 1 (yoaB) from Lactococcus lactis subsp. lactis (strain IL1403) (Streptococcus lactis).